The chain runs to 621 residues: MAU2 chromatid cohesion factor homolog (621 aa).

TPR repeat units lie at residues 96-129 (FDTA…SQNN), 451-484 (GGFY…ANAE), and 491-524 (SCSL…ASKI).

This sequence belongs to the SCC4/mau-2 family. In terms of assembly, interacts with Nipped-B to form the cohesin loading complex.

The protein resides in the nucleus. The protein localises to the nucleoplasm. Required for association of the cohesin complex with chromatin during interphase. Plays a role in sister chromatid cohesion and normal progression through prometaphase. This is MAU2 chromatid cohesion factor homolog from Drosophila virilis (Fruit fly).